The primary structure comprises 78 residues: Large ribosomal subunit protein uL29 (78 aa).

This sequence belongs to the universal ribosomal protein uL29 family.

The protein is Large ribosomal subunit protein uL29 of Rhodococcus erythropolis (strain PR4 / NBRC 100887).